The following is a 161-amino-acid chain: Cyclic pyranopterin monophosphate synthase (161 aa).

Substrate-binding positions include 73 to 75 (LCH) and 110 to 111 (ME). Asp-125 is an active-site residue.

It belongs to the MoaC family. In terms of assembly, homohexamer; trimer of dimers.

It catalyses the reaction (8S)-3',8-cyclo-7,8-dihydroguanosine 5'-triphosphate = cyclic pyranopterin phosphate + diphosphate. The protein operates within cofactor biosynthesis; molybdopterin biosynthesis. Its function is as follows. Catalyzes the conversion of (8S)-3',8-cyclo-7,8-dihydroguanosine 5'-triphosphate to cyclic pyranopterin monophosphate (cPMP). The sequence is that of Cyclic pyranopterin monophosphate synthase from Pseudomonas savastanoi pv. phaseolicola (strain 1448A / Race 6) (Pseudomonas syringae pv. phaseolicola (strain 1448A / Race 6)).